The following is a 404-amino-acid chain: NADH-quinone oxidoreductase subunit D (404 aa).

Belongs to the complex I 49 kDa subunit family. NDH-1 is composed of 14 different subunits. Subunits NuoB, C, D, E, F, and G constitute the peripheral sector of the complex.

It is found in the cell inner membrane. The catalysed reaction is a quinone + NADH + 5 H(+)(in) = a quinol + NAD(+) + 4 H(+)(out). Its function is as follows. NDH-1 shuttles electrons from NADH, via FMN and iron-sulfur (Fe-S) centers, to quinones in the respiratory chain. The immediate electron acceptor for the enzyme in this species is believed to be ubiquinone. Couples the redox reaction to proton translocation (for every two electrons transferred, four hydrogen ions are translocated across the cytoplasmic membrane), and thus conserves the redox energy in a proton gradient. The polypeptide is NADH-quinone oxidoreductase subunit D (Dinoroseobacter shibae (strain DSM 16493 / NCIMB 14021 / DFL 12)).